The primary structure comprises 351 residues: Photosystem II D2 protein (351 aa).

Residues 39 to 59 (CSYLALGAWFTGTTFVTSWYT) traverse the membrane as a helical segment. Residue His116 participates in chlorophyll a binding. Residues 123 to 139 (GFCLRQFEIARLVGLRP) form a helical membrane-spanning segment. Pheophytin a contacts are provided by Gln128 and Asn141. The helical transmembrane segment at 151-164 (VFVSVFLLYPLGQA) threads the bilayer. Chlorophyll a is bound at residue His196. Residues 206-226 (GALLCAIHGATVQNTLFEDGE) form a helical membrane-spanning segment. Residues His213 and Phe260 each coordinate a plastoquinone. His213 contributes to the Fe cation binding site. His267 provides a ligand contact to Fe cation. A helical membrane pass occupies residues 277 to 293 (GLWASSIGIVGLALNLR).

This sequence belongs to the reaction center PufL/M/PsbA/D family. PSII is composed of 1 copy each of membrane proteins PsbA, PsbB, PsbC, PsbD, PsbE, PsbF, PsbH, PsbI, PsbJ, PsbK, PsbL, PsbM, PsbT, PsbX, PsbY, PsbZ, Psb30/Ycf12, at least 3 peripheral proteins of the oxygen-evolving complex and a large number of cofactors. It forms dimeric complexes. It depends on The D1/D2 heterodimer binds P680, chlorophylls that are the primary electron donor of PSII, and subsequent electron acceptors. It shares a non-heme iron and each subunit binds pheophytin, quinone, additional chlorophylls, carotenoids and lipids. There is also a Cl(-1) ion associated with D1 and D2, which is required for oxygen evolution. The PSII complex binds additional chlorophylls, carotenoids and specific lipids. as a cofactor.

It localises to the plastid. Its subcellular location is the chloroplast thylakoid membrane. The enzyme catalyses 2 a plastoquinone + 4 hnu + 2 H2O = 2 a plastoquinol + O2. Its function is as follows. Photosystem II (PSII) is a light-driven water:plastoquinone oxidoreductase that uses light energy to abstract electrons from H(2)O, generating O(2) and a proton gradient subsequently used for ATP formation. It consists of a core antenna complex that captures photons, and an electron transfer chain that converts photonic excitation into a charge separation. The D1/D2 (PsbA/PsbD) reaction center heterodimer binds P680, the primary electron donor of PSII as well as several subsequent electron acceptors. D2 is needed for assembly of a stable PSII complex. The polypeptide is Photosystem II D2 protein (Cyanidioschyzon merolae (strain NIES-3377 / 10D) (Unicellular red alga)).